A 117-amino-acid chain; its full sequence is UPF0102 protein FTF0898c (117 aa).

This sequence belongs to the UPF0102 family.

In Francisella tularensis subsp. tularensis (strain FSC 198), this protein is UPF0102 protein FTF0898c.